The primary structure comprises 73 residues: Large ribosomal subunit protein bL31 (73 aa).

This sequence belongs to the bacterial ribosomal protein bL31 family. Type A subfamily. In terms of assembly, part of the 50S ribosomal subunit.

In terms of biological role, binds the 23S rRNA. The polypeptide is Large ribosomal subunit protein bL31 (Bartonella henselae (strain ATCC 49882 / DSM 28221 / CCUG 30454 / Houston 1) (Rochalimaea henselae)).